Reading from the N-terminus, the 156-residue chain is Deoxyuridine 5'-triphosphate nucleotidohydrolase (156 aa).

Residues 76–78 (RSG), Asn-89, 93–95 (TVD), and Lys-103 contribute to the substrate site.

It belongs to the dUTPase family. Mg(2+) serves as cofactor.

It carries out the reaction dUTP + H2O = dUMP + diphosphate + H(+). Its pathway is pyrimidine metabolism; dUMP biosynthesis; dUMP from dCTP (dUTP route): step 2/2. This enzyme is involved in nucleotide metabolism: it produces dUMP, the immediate precursor of thymidine nucleotides and it decreases the intracellular concentration of dUTP so that uracil cannot be incorporated into DNA. This is Deoxyuridine 5'-triphosphate nucleotidohydrolase from Rhizobium etli (strain ATCC 51251 / DSM 11541 / JCM 21823 / NBRC 15573 / CFN 42).